Consider the following 371-residue polypeptide: AA9 family lytic polysaccharide monooxygenase B (371 aa).

Residues 1 to 25 (MSIAKIAGVVLGSAALVAGHGYVSG) form the signal peptide. Positions 20 and 104 each coordinate Cu(2+). Intrachain disulfides connect C74/C194 and C115/C119. An N-linked (GlcNAc...) asparagine glycan is attached at N154. H180 and Q189 together coordinate O2. Y191 contacts Cu(2+). The interval 304-332 (HVQATSSSAAASTPTASSGASSGSGSSSS) is disordered. Residues 307–332 (ATSSSAAASTPTASSGASSGSGSSSS) show a composition bias toward low complexity.

The protein belongs to the polysaccharide monooxygenase AA9 family. Requires Cu(2+) as cofactor.

Its subcellular location is the secreted. The enzyme catalyses [(1-&gt;4)-beta-D-glucosyl]n+m + reduced acceptor + O2 = 4-dehydro-beta-D-glucosyl-[(1-&gt;4)-beta-D-glucosyl]n-1 + [(1-&gt;4)-beta-D-glucosyl]m + acceptor + H2O.. In terms of biological role, lytic polysaccharide monooxygenase (LPMO) that depolymerizes crystalline and amorphous polysaccharides via the oxidation of scissile alpha- or beta-(1-4)-glycosidic bonds, yielding C1 and C4 oxidation products. Catalysis by LPMOs requires the reduction of the active-site copper from Cu(II) to Cu(I) by a reducing agent and H(2)O(2) or O(2) as a cosubstrate. In addition to cellulose, also cleaves the beta-(1!4)-glucan backbone of tamarind xyloglucan, irrespective of substitutions which contrasts with AA9A xyloglucan cleavage activity. The polypeptide is AA9 family lytic polysaccharide monooxygenase B (Aspergillus tamarii).